We begin with the raw amino-acid sequence, 72 residues long: MAKEESIEIEGVIVDALPNAQFKVKLENGLEVLAHVSGKIRMHYIRILPGDKVKVQISPYDITKGRITYRYK.

An S1-like domain is found at 1–72; the sequence is MAKEESIEIE…TKGRITYRYK (72 aa).

It belongs to the IF-1 family. Component of the 30S ribosomal translation pre-initiation complex which assembles on the 30S ribosome in the order IF-2 and IF-3, IF-1 and N-formylmethionyl-tRNA(fMet); mRNA recruitment can occur at any time during PIC assembly.

The protein localises to the cytoplasm. One of the essential components for the initiation of protein synthesis. Stabilizes the binding of IF-2 and IF-3 on the 30S subunit to which N-formylmethionyl-tRNA(fMet) subsequently binds. Helps modulate mRNA selection, yielding the 30S pre-initiation complex (PIC). Upon addition of the 50S ribosomal subunit IF-1, IF-2 and IF-3 are released leaving the mature 70S translation initiation complex. This is Translation initiation factor IF-1 from Chlorobium chlorochromatii (strain CaD3).